The sequence spans 437 residues: UDP-N-acetylmuramoylalanine--D-glutamate ligase (437 aa).

ATP is bound at residue glycine 112 to threonine 118.

The protein belongs to the MurCDEF family.

It localises to the cytoplasm. It carries out the reaction UDP-N-acetyl-alpha-D-muramoyl-L-alanine + D-glutamate + ATP = UDP-N-acetyl-alpha-D-muramoyl-L-alanyl-D-glutamate + ADP + phosphate + H(+). It functions in the pathway cell wall biogenesis; peptidoglycan biosynthesis. In terms of biological role, cell wall formation. Catalyzes the addition of glutamate to the nucleotide precursor UDP-N-acetylmuramoyl-L-alanine (UMA). The protein is UDP-N-acetylmuramoylalanine--D-glutamate ligase of Haemophilus influenzae (strain 86-028NP).